We begin with the raw amino-acid sequence, 417 residues long: Succinate--CoA ligase [ADP-forming] subunit beta, mitochondrial (417 aa).

The N-terminal 24 residues, 1 to 24 (MLRKLANQSLSVAGKWQQQQLRRL), are a transit peptide targeting the mitochondrion. In terms of domain architecture, ATP-grasp spans 32 to 275 (AELMSKYGIN…SSQEDPREVA (244 aa)). ATP contacts are provided by residues K71, 78 to 80 (GRG), and E138. N230 and D244 together coordinate Mg(2+). Residues N295 and 352-354 (GIM) contribute to the substrate site.

It belongs to the succinate/malate CoA ligase beta subunit family. In terms of assembly, heterodimer of an alpha and a beta subunit. Mg(2+) serves as cofactor. Expressed in roots, stems, flowers, leaves and fruits.

The protein resides in the mitochondrion. The enzyme catalyses succinate + ATP + CoA = succinyl-CoA + ADP + phosphate. It participates in carbohydrate metabolism; tricarboxylic acid cycle; succinate from succinyl-CoA (ligase route): step 1/1. Its function is as follows. Succinyl-CoA synthetase functions in the citric acid cycle (TCA), coupling the hydrolysis of succinyl-CoA to the synthesis of ATP and thus represents the only step of substrate-level phosphorylation in the TCA. The beta subunit provides nucleotide specificity of the enzyme and binds the substrate succinate, while the binding sites for coenzyme A and phosphate are found in the alpha subunit. In Solanum lycopersicum (Tomato), this protein is Succinate--CoA ligase [ADP-forming] subunit beta, mitochondrial.